Here is a 586-residue protein sequence, read N- to C-terminus: Pyruvate kinase (586 aa).

Arg-32 serves as a coordination point for substrate. Residues Asn-34, Ser-36, Asp-66, and Thr-67 each contribute to the K(+) site. 34 to 37 (NFSH) contacts ATP. ATP contacts are provided by Arg-73 and Lys-156. Glu-222 is a Mg(2+) binding site. Residues Gly-245, Asp-246, and Thr-278 each coordinate substrate. Asp-246 is a binding site for Mg(2+).

Belongs to the pyruvate kinase family. This sequence in the C-terminal section; belongs to the PEP-utilizing enzyme family. As to quaternary structure, homotetramer. The cofactor is Mg(2+). It depends on K(+) as a cofactor.

The enzyme catalyses pyruvate + ATP = phosphoenolpyruvate + ADP + H(+). It functions in the pathway carbohydrate degradation; glycolysis; pyruvate from D-glyceraldehyde 3-phosphate: step 5/5. The sequence is that of Pyruvate kinase (pyk) from Sporosarcina psychrophila (Bacillus psychrophilus).